A 273-amino-acid polypeptide reads, in one-letter code: Elongation factor Ts (273 aa).

The involved in Mg(2+) ion dislocation from EF-Tu stretch occupies residues 79 to 82 (TDFV).

This sequence belongs to the EF-Ts family.

It localises to the cytoplasm. In terms of biological role, associates with the EF-Tu.GDP complex and induces the exchange of GDP to GTP. It remains bound to the aminoacyl-tRNA.EF-Tu.GTP complex up to the GTP hydrolysis stage on the ribosome. This is Elongation factor Ts from Hydrogenobaculum sp. (strain Y04AAS1).